We begin with the raw amino-acid sequence, 373 residues long: RNA 3'-terminal phosphate cyclase-like protein (373 aa).

It belongs to the RNA 3'-terminal cyclase family. Type 2 subfamily. As to quaternary structure, part of the small subunit (SSU) processome, composed of more than 70 proteins and the RNA chaperone small nucleolar RNA (snoRNA) U3. Interacts with BMS1.

The protein resides in the nucleus. It localises to the nucleolus. As part of the small subunit (SSU) processome, it plays a role in 40S-ribosomal-subunit biogenesis in the early pre-rRNA processing steps at sites A0, A1 and A2 that are required for proper maturation of the 18S RNA. Activates BMS1 by promoting GDP/GTP exchange. Does not have cyclase activity. This chain is RNA 3'-terminal phosphate cyclase-like protein (RCL1), found in Bos taurus (Bovine).